A 451-amino-acid polypeptide reads, in one-letter code: Phosphoglucosamine mutase (451 aa).

Residue S103 is the Phosphoserine intermediate of the active site. The Mg(2+) site is built by S103, D243, D245, and D247. Position 103 is a phosphoserine (S103).

The protein belongs to the phosphohexose mutase family. Requires Mg(2+) as cofactor. In terms of processing, activated by phosphorylation.

The enzyme catalyses alpha-D-glucosamine 1-phosphate = D-glucosamine 6-phosphate. Its function is as follows. Catalyzes the conversion of glucosamine-6-phosphate to glucosamine-1-phosphate. This is Phosphoglucosamine mutase from Limosilactobacillus reuteri subsp. reuteri (strain JCM 1112) (Lactobacillus reuteri).